The following is a 214-amino-acid chain: Large ribosomal subunit protein bL25 (214 aa).

The tract at residues 178–214 (VEPEEEELPETDEEGEGAEGEAAEAAEGESAEGESEE) is disordered. Positions 179–214 (EPEEEELPETDEEGEGAEGEAAEAAEGESAEGESEE) are enriched in acidic residues.

It belongs to the bacterial ribosomal protein bL25 family. CTC subfamily. Part of the 50S ribosomal subunit; part of the 5S rRNA/L5/L18/L25 subcomplex. Contacts the 5S rRNA. Binds to the 5S rRNA independently of L5 and L18.

This is one of the proteins that binds to the 5S RNA in the ribosome where it forms part of the central protuberance. This is Large ribosomal subunit protein bL25 from Corynebacterium jeikeium (strain K411).